A 445-amino-acid chain; its full sequence is UPF0210 protein llmg_1581 (445 aa).

Belongs to the UPF0210 family. In terms of assembly, homodimer.

In Lactococcus lactis subsp. cremoris (strain MG1363), this protein is UPF0210 protein llmg_1581.